The sequence spans 113 residues: ATP-dependent Clp protease adapter protein ClpS (113 aa).

Pro residues predominate over residues Met-1 to Pro-11. Disordered stretches follow at residues Met-1–Glu-24 and Thr-92–Glu-113.

This sequence belongs to the ClpS family. In terms of assembly, binds to the N-terminal domain of the chaperone ClpA.

Its function is as follows. Involved in the modulation of the specificity of the ClpAP-mediated ATP-dependent protein degradation. The polypeptide is ATP-dependent Clp protease adapter protein ClpS (Deinococcus radiodurans (strain ATCC 13939 / DSM 20539 / JCM 16871 / CCUG 27074 / LMG 4051 / NBRC 15346 / NCIMB 9279 / VKM B-1422 / R1)).